A 119-amino-acid chain; its full sequence is MPRVKGGPVTRRRRKKVLKLAKGYFGAKHALYRVANQQVMKSLMYAYRDRRQRKRDFRKLWIVRINAAARQNGLSYSRLMHGLKLAGVEVNRKIVADLAVNDQAAFAQLADLAKANLNK.

The protein belongs to the bacterial ribosomal protein bL20 family.

In terms of biological role, binds directly to 23S ribosomal RNA and is necessary for the in vitro assembly process of the 50S ribosomal subunit. It is not involved in the protein synthesizing functions of that subunit. This chain is Large ribosomal subunit protein bL20 (rplT), found in Geobacillus stearothermophilus (Bacillus stearothermophilus).